Here is a 688-residue protein sequence, read N- to C-terminus: Elongation factor G (688 aa).

Residues 8 to 282 form the tr-type G domain; it reads EKFRNFGIMA…GVVDYLPSPL (275 aa). GTP is bound by residues 17-24, 81-85, and 135-138; these read AHIDAGKT, DTPGH, and NKMD.

Belongs to the TRAFAC class translation factor GTPase superfamily. Classic translation factor GTPase family. EF-G/EF-2 subfamily.

Its subcellular location is the cytoplasm. Functionally, catalyzes the GTP-dependent ribosomal translocation step during translation elongation. During this step, the ribosome changes from the pre-translocational (PRE) to the post-translocational (POST) state as the newly formed A-site-bound peptidyl-tRNA and P-site-bound deacylated tRNA move to the P and E sites, respectively. Catalyzes the coordinated movement of the two tRNA molecules, the mRNA and conformational changes in the ribosome. In Clostridium perfringens (strain ATCC 13124 / DSM 756 / JCM 1290 / NCIMB 6125 / NCTC 8237 / Type A), this protein is Elongation factor G.